The sequence spans 53 residues: MFRWGIIFLIIALIEAALGFGGLAGTAAWAAKVVFVVGIILFLISLFTGRKRL.

Helical transmembrane passes span 4–24 (WGII…GGLA) and 27–47 (AAWA…ISLF).

The protein belongs to the UPF0391 family.

The protein localises to the cell membrane. This Yersinia pestis (strain Pestoides F) protein is UPF0391 membrane protein YPDSF_3201.